The sequence spans 320 residues: Phospho-N-acetylmuramoyl-pentapeptide-transferase (320 aa).

The next 9 helical transmembrane spans lie at 5–25 (LWAL…LIKF), 51–71 (MGGL…GAAY), 76–96 (GVVA…IGGI), 124–144 (VVIM…IPMI), 145–165 (GTIN…VGWS), 176–196 (GLLA…AMHM), 198–218 (NHII…FLIF), 233–255 (LALG…LIWF), and 298–318 (WQID…GIFY).

Belongs to the glycosyltransferase 4 family. MraY subfamily. It depends on Mg(2+) as a cofactor.

It is found in the cell membrane. The enzyme catalyses UDP-N-acetyl-alpha-D-muramoyl-L-alanyl-gamma-D-glutamyl-L-lysyl-D-alanyl-D-alanine + di-trans,octa-cis-undecaprenyl phosphate = Mur2Ac(oyl-L-Ala-gamma-D-Glu-L-Lys-D-Ala-D-Ala)-di-trans,octa-cis-undecaprenyl diphosphate + UMP. It participates in cell wall biogenesis; peptidoglycan biosynthesis. Functionally, catalyzes the initial step of the lipid cycle reactions in the biosynthesis of the cell wall peptidoglycan: transfers peptidoglycan precursor phospho-MurNAc-pentapeptide from UDP-MurNAc-pentapeptide onto the lipid carrier undecaprenyl phosphate, yielding undecaprenyl-pyrophosphoryl-MurNAc-pentapeptide, known as lipid I. This chain is Phospho-N-acetylmuramoyl-pentapeptide-transferase, found in Leuconostoc citreum (strain KM20).